We begin with the raw amino-acid sequence, 35 residues long: Cytochrome c-550 (35 aa).

Positions 17, 20, and 21 each coordinate heme c.

In terms of processing, binds 1 heme c group covalently per subunit.

In terms of biological role, monoheme cytochrome which functions as an electron carrier in the reduction of nitrite by membrane vesicles. This is Cytochrome c-550 from Virgibacillus halodenitrificans (Bacillus halodenitrificans).